The primary structure comprises 182 residues: Neuropeptide CCHamide-1 (182 aa).

Residues 1 to 22 form the signal peptide; sequence MWYSKCSWTLVVLVALFALVTG. Cys24 and Cys31 form a disulfide bridge. Histidine amide is present on His35. Positions 39–182 are excised as a propeptide; the sequence is SGGKAVIDAK…ENYSGYELTK (144 aa). 2 disordered regions span residues 67–103 and 133–154; these read NNNN…AAPA and QLQD…DAAA. The segment covering 87–103 has biased composition (low complexity); sequence RNTNANSANNIPLAAPA. Residue Asn174 is glycosylated (N-linked (GlcNAc...) asparagine).

As to expression, expressed in endocrine cells of the larval midgut (at protein level). In the brain, expressed in the optic lobes, lateral protocerebrum, subesophageal ganglion, and intermediate and superior medial protocerebrum (at protein level). Expressed in DN1a neurons but not in other clock neurons and expression follows a rhythmic pattern controlled by the circadian clock (at protein level). In the posterior midgut, expressed in enteroendocrine cells (at protein level). Low levels in larval brain with higher levels in larval and adult gut and adult brain.

Its subcellular location is the secreted. In terms of biological role, neuropeptide ligand for the CCHamide-1 receptor CCHa1-R. Neuromessenger mediating signaling between neuronal cells of the circadian clock network involved in regulation of sleep latency (the time required to fall asleep), amount of sleep and depth of sleep (arousability). Together with PDF, involved in regulating intensity and periodicity of daytime activity. In subsets of clock neurons modulates the rhythmic expression of PDP1 and PDF, and together with PDF modulates the rhythmic expression of circadian protein PER/period, but not TIM/timeless. Mediates signaling from DN1a (anterior dorsal neurons 1) clock neurons to s-LNv (small ventral lateral neurons) clock neurons through CCHa1-R, contributing to regulation of activity rhythms by the circadian clock, particularly in the morning. May be involved in signaling between clock neurons and non-clock neurons, such as the fan-shaped body, involved in sleep homeostasis. In response to a high protein diet mediates hormonal signaling between the gut and a CCHa1-R expressing subset of dopaminergic cells in the protocerebral anterior medial (PAM) cluster of the brain. This suppresses arousability by mechano-sensory stimulation (but not thermal stimulation) but is not involved in regulation of sleep patterns. This Drosophila melanogaster (Fruit fly) protein is Neuropeptide CCHamide-1.